A 185-amino-acid polypeptide reads, in one-letter code: Neuronal vesicle trafficking-associated protein 1 (185 aa).

Topologically, residues 1–82 (MVKLGNNFAE…ITEGVTERFK (82 aa)) are cytoplasmic. A helical; Signal-anchor for type II membrane protein transmembrane segment spans residues 83–103 (VSVLVLFALAFLTCVVFLVVY). Residues 104-185 (KVYKYDRACP…QETEAAEKSA (82 aa)) lie on the Lumenal side of the membrane. Residues 129–164 (ESYYAEQDSSAREKFYTVINHYNLAKQSITRSVSPW) are required for GRIP1 interaction.

This sequence belongs to the NSG family. As to quaternary structure, forms a complex with GRIP1, GRIA2 and STX12 through direct interaction with GRIP1; controls the intracellular fate of AMPAR and the endosomal sorting of the GRIA2 subunit toward recycling and membrane targeting. Interacts with STX12. Interacts with APP; could regulate APP processing. Interacts with FAM171A1.

The protein resides in the membrane. It localises to the golgi apparatus. Its subcellular location is the trans-Golgi network membrane. It is found in the endosome membrane. The protein localises to the cell projection. The protein resides in the dendrite. It localises to the early endosome membrane. Its subcellular location is the late endosome membrane. It is found in the lysosome lumen. The protein localises to the recycling endosome membrane. The protein resides in the cytoplasmic vesicle membrane. It localises to the golgi stack membrane. Its subcellular location is the endosome. It is found in the multivesicular body membrane. The protein localises to the endoplasmic reticulum membrane. Plays a role in the recycling mechanism in neurons of multiple receptors, including AMPAR, APP and L1CAM and acts at the level of early endosomes to promote sorting of receptors toward a recycling pathway. Regulates sorting and recycling of GRIA2 through interaction with GRIP1 and then contributes to the regulation of synaptic transmission and plasticity by affecting the recycling and targeting of AMPA receptors to the synapse. Is required for faithful sorting of L1CAM to axons by facilitating trafficking from somatodendritic early endosome or the recycling endosome. In an other hand, induces apoptosis via the activation of CASP3 in response to DNA damage. This chain is Neuronal vesicle trafficking-associated protein 1, found in Macaca fascicularis (Crab-eating macaque).